A 49-amino-acid chain; its full sequence is Sperm protamine P1 (49 aa).

The segment at 1-49 (MARYRCCRSHSRSRCRRRRRRSRRRRRRSCGRRRRAGYRRYTVRYRRRR) is disordered.

It belongs to the protamine P1 family. As to expression, testis.

The protein localises to the nucleus. It localises to the chromosome. In terms of biological role, protamines substitute for histones in the chromatin of sperm during the haploid phase of spermatogenesis. They compact sperm DNA into a highly condensed, stable and inactive complex. This chain is Sperm protamine P1 (PRM1), found in Macronycteris commersonii (Commerson's roundleaf bat).